A 413-amino-acid polypeptide reads, in one-letter code: Serine/threonine transporter SstT (413 aa).

The next 9 helical transmembrane spans lie at 14–34, 44–64, 82–102, 141–161, 178–198, 217–237, 290–310, 330–350, and 356–376; these read GSLVGQILVGLVLGIALASFS, LGTLFVSALKAVAPVLVFILV, IVLLYLLGTFAAALVAVVVSF, ALASGNFIGILAWAIGLGVAL, GVTFIVRVVIRFAPLGIFGLV, LMVLIGAMLLVALVLNPLIVF, IPLGATINMAGAAITITVLTL, LVAAVCACGASGVAGGSLLLI, and LFGISSDIAMQVVAVGFIIGV.

Belongs to the dicarboxylate/amino acid:cation symporter (DAACS) (TC 2.A.23) family.

It localises to the cell inner membrane. The catalysed reaction is L-serine(in) + Na(+)(in) = L-serine(out) + Na(+)(out). The enzyme catalyses L-threonine(in) + Na(+)(in) = L-threonine(out) + Na(+)(out). In terms of biological role, involved in the import of serine and threonine into the cell, with the concomitant import of sodium (symport system). This Edwardsiella ictaluri (strain 93-146) protein is Serine/threonine transporter SstT.